A 71-amino-acid chain; its full sequence is Large ribosomal subunit protein bL31 (71 aa).

Cys-16, Cys-18, Cys-36, and Cys-39 together coordinate Zn(2+).

It belongs to the bacterial ribosomal protein bL31 family. Type A subfamily. As to quaternary structure, part of the 50S ribosomal subunit. Zn(2+) serves as cofactor.

Functionally, binds the 23S rRNA. This chain is Large ribosomal subunit protein bL31, found in Thermotoga maritima (strain ATCC 43589 / DSM 3109 / JCM 10099 / NBRC 100826 / MSB8).